We begin with the raw amino-acid sequence, 1523 residues long: Rho GTPase-activating protein gacHH (1523 aa).

Kelch repeat units lie at residues Asp30 to Ser76, Lys83 to Asp133, and Tyr135 to Pro184. Polar residues-rich tracts occupy residues Asn161–Gly173 and Pro184–Gln194. The disordered stretch occupies residues Asn161–Thr256. Residues Ser195 to Ser211 show a composition bias toward low complexity. The span at Ala212–Pro221 shows a compositional bias: polar residues. Low complexity predominate over residues Asn227 to Asn244. Kelch repeat units follow at residues Lys335 to Ser384, Leu386 to Ser441, and Ile443 to Ser496. Disordered stretches follow at residues Leu510–Asn569, Gln609–Asp631, and Asn647–Ser671. Positions Gly615 to Gly626 are enriched in gly residues. Residues Cys690 to Ser729 are a coiled coil. Residues Asn748–Leu786 are disordered. The stretch at Tyr812 to Phe840 forms a coiled coil. Disordered stretches follow at residues Ser861–Gln881, Leu905–Leu927, Thr963–Thr991, Ser1006–Lys1096, and Asn1143–Ile1194. The segment covering Gln870–Gln881 has biased composition (low complexity). Positions Leu905 to Val915 are enriched in basic and acidic residues. Low complexity-rich tracts occupy residues Pro971 to Gln981, Ser1012 to Asn1030, Gln1043 to Gln1079, and Asn1143 to Leu1153. Residues Leu1151–Phe1228 are a coiled coil. Residues Ser1155 to Ile1194 are compositionally biased toward basic and acidic residues. Residues Ser1233–Phe1411 form the Rho-GAP domain. The disordered stretch occupies residues Asp1425 to Ile1482. The span at Ser1430–Thr1476 shows a compositional bias: low complexity.

The protein localises to the cytoplasm. Rho GTPase-activating protein involved in the signal transduction pathway. The sequence is that of Rho GTPase-activating protein gacHH (gacHH) from Dictyostelium discoideum (Social amoeba).